Consider the following 599-residue polypeptide: MTDLTAQELAQPSWQTRDHQDDPVIGELRNRFGPDAFTVQATRTGVPVVWVKREQLLEIVEFLRKLPKPYVMLYDLHGMDERLRTHRAGLPAADFSVFYHFISIERNRDIMLKVALSENDLHVPTLTKIFPNANWYERETWEMFGIDVVGHPHLTRIMMPQTWEGHPLRKDYPARATEFDPFELTKQKEDLEMESLTFKPEDWGMKRSTANEDFMFLNLGPNHPSAHGAFRIILQLDGEEIVDCVPDIGYHHRGAEKMGERQSWHSYIPYTDRIEYLGGCVNEMPYVLAVEKLAGIKVPERVEVIRVMLSELFRINSHLLYISTFIQDVGAMSPVFFAFTDRQKIYDVVEAITGFRMHPAWFRIGGVAHDLPKGWERLLREFLDWMPKRLKAYEQTALKNSVLIGRAKGVSAYNMEEALAWGTTGAGLRATGLDFDVRKWRPYSGYENFDFEIPIGDGVSCAYSRVMLKMEEMRQSMRILEQCLNNMPAGPFKADHPLTTPPPKERTLQHIETLITHFLQVSWGPVMPANESFQMIEATKGINSYYLTSDGSTMSYRTRVRTPSFPHLQQIPSVINGSLVSDLIVYLGSIDFVMSDVDR.

A compositionally biased stretch (polar residues) spans 1–15; sequence MTDLTAQELAQPSWQ. Residues 1–21 form a disordered region; the sequence is MTDLTAQELAQPSWQTRDHQD. Residues 1–189 form an NADH dehydrogenase I subunit C region; that stretch reads MTDLTAQELA…DPFELTKQKE (189 aa). Residues 213–599 form an NADH dehydrogenase I subunit D region; that stretch reads DFMFLNLGPN…IDFVMSDVDR (387 aa).

It in the N-terminal section; belongs to the complex I 30 kDa subunit family. In the C-terminal section; belongs to the complex I 49 kDa subunit family. In terms of assembly, NDH-1 is composed of 13 different subunits. Subunits NuoB, CD, E, F, and G constitute the peripheral sector of the complex.

The protein localises to the cell inner membrane. The enzyme catalyses a quinone + NADH + 5 H(+)(in) = a quinol + NAD(+) + 4 H(+)(out). In terms of biological role, NDH-1 shuttles electrons from NADH, via FMN and iron-sulfur (Fe-S) centers, to quinones in the respiratory chain. The immediate electron acceptor for the enzyme in this species is believed to be ubiquinone. Couples the redox reaction to proton translocation (for every two electrons transferred, four hydrogen ions are translocated across the cytoplasmic membrane), and thus conserves the redox energy in a proton gradient. The protein is NADH-quinone oxidoreductase subunit C/D of Erwinia tasmaniensis (strain DSM 17950 / CFBP 7177 / CIP 109463 / NCPPB 4357 / Et1/99).